A 393-amino-acid chain; its full sequence is Ribonuclease D (393 aa).

One can recognise a 3'-5' exonuclease domain in the interval 14 to 181 (LITTTEDLTG…VYQLLLERLE (168 aa)). Positions 219–300 (NRRMLGVLRA…AAARALPDGA (82 aa)) constitute an HRDC domain.

The protein belongs to the RNase D family. It depends on a divalent metal cation as a cofactor.

It is found in the cytoplasm. It carries out the reaction Exonucleolytic cleavage that removes extra residues from the 3'-terminus of tRNA to produce 5'-mononucleotides.. Functionally, exonuclease involved in the 3' processing of various precursor tRNAs. Initiates hydrolysis at the 3'-terminus of an RNA molecule and releases 5'-mononucleotides. This is Ribonuclease D from Gluconacetobacter diazotrophicus (strain ATCC 49037 / DSM 5601 / CCUG 37298 / CIP 103539 / LMG 7603 / PAl5).